Consider the following 89-residue polypeptide: Progonadoliberin-1 (89 aa).

The signal sequence occupies residues 1-23 (MKAFPTFALLFLVLLFSAHVSDA). Gln24 is subject to Pyrrolidone carboxylic acid. Gly33 carries the glycine amide modification.

This sequence belongs to the GnRH family. In terms of tissue distribution, expressed in the forebrain from larval stages.

It is found in the secreted. Functionally, stimulates the secretion of gonadotropins. The chain is Progonadoliberin-1 (gnrh1) from Xenopus laevis (African clawed frog).